Consider the following 214-residue polypeptide: Pyridoxine/pyridoxamine 5'-phosphate oxidase (214 aa).

Substrate is bound by residues 9-12 and lysine 68; that span reads RRSY. Residues 63 to 68, 78 to 79, lysine 85, and glutamine 107 contribute to the FMN site; these read RVVLLK and YT. Residues tyrosine 125, arginine 129, and serine 133 each coordinate substrate. FMN-binding positions include 142–143 and tryptophan 187; that span reads QS. 193–195 provides a ligand contact to substrate; that stretch reads RLH. FMN is bound at residue arginine 197.

The protein belongs to the pyridoxamine 5'-phosphate oxidase family. In terms of assembly, homodimer. FMN is required as a cofactor.

It carries out the reaction pyridoxamine 5'-phosphate + O2 + H2O = pyridoxal 5'-phosphate + H2O2 + NH4(+). The catalysed reaction is pyridoxine 5'-phosphate + O2 = pyridoxal 5'-phosphate + H2O2. It functions in the pathway cofactor metabolism; pyridoxal 5'-phosphate salvage; pyridoxal 5'-phosphate from pyridoxamine 5'-phosphate: step 1/1. The protein operates within cofactor metabolism; pyridoxal 5'-phosphate salvage; pyridoxal 5'-phosphate from pyridoxine 5'-phosphate: step 1/1. Its function is as follows. Catalyzes the oxidation of either pyridoxine 5'-phosphate (PNP) or pyridoxamine 5'-phosphate (PMP) into pyridoxal 5'-phosphate (PLP). The sequence is that of Pyridoxine/pyridoxamine 5'-phosphate oxidase from Christiangramia forsetii (strain DSM 17595 / CGMCC 1.15422 / KT0803) (Gramella forsetii).